The primary structure comprises 158 residues: MAVAELEKKVFELTTVEKLVGWARSGSMWPMTFGLACCAVEMMHVGAARYDLDRFGIIFRPSPRQSDVMIVAGTLCNKMAPALRKVYDQMPEPRWVISMGSCANGGGYYHYSYSVVRGCDRIVPVDVYVPGCPPTAEALLYGIIQLQNKIRRKPVLEA.

[4Fe-4S] cluster is bound by residues C37, C38, C102, and C132.

Belongs to the complex I 20 kDa subunit family. As to quaternary structure, NDH-1 is composed of 14 different subunits. Subunits NuoB, C, D, E, F, and G constitute the peripheral sector of the complex. [4Fe-4S] cluster is required as a cofactor.

The protein localises to the cell inner membrane. It carries out the reaction a quinone + NADH + 5 H(+)(in) = a quinol + NAD(+) + 4 H(+)(out). Its function is as follows. NDH-1 shuttles electrons from NADH, via FMN and iron-sulfur (Fe-S) centers, to quinones in the respiratory chain. Couples the redox reaction to proton translocation (for every two electrons transferred, four hydrogen ions are translocated across the cytoplasmic membrane), and thus conserves the redox energy in a proton gradient. The protein is NADH-quinone oxidoreductase subunit B of Legionella pneumophila (strain Corby).